An 860-amino-acid polypeptide reads, in one-letter code: DDB1- and CUL4-associated factor 6 (860 aa).

WD repeat units follow at residues 49 to 88 (VHDG…VLTT), 92 to 133 (GHRA…ETNR), 139 to 179 (CHYG…SCTK), 189 to 229 (NCRR…TRAT), and 251 to 290 (NKSC…AREL). 2 stretches are compositionally biased toward basic and acidic residues: residues 288 to 303 (RELK…EELR) and 312 to 334 (LRGD…RDGE). Disordered regions lie at residues 288 to 340 (RELK…PNVS), 355 to 392 (EASE…SPDL), 407 to 490 (QFLQ…TTST), and 502 to 675 (IASS…GPGD). The residue at position 336 (Ser336) is a Phosphoserine. Polar residues-rich tracts occupy residues 379-388 (DISTLPTVPS) and 409-421 (LQPS…SAQA). A compositionally biased stretch (low complexity) spans 422-441 (HSTSSPTESPHSTPLLSSPD). Residues 457–467 (HQSDNNNEKLS) show a composition bias toward basic and acidic residues. Residues 480–490 (HYSTEGTTTST) show a composition bias toward polar residues. The span at 502–511 (IASSSRGIGS) shows a compositional bias: low complexity. The segment covering 535–549 (SETKAPEESSEDVTK) has biased composition (basic and acidic residues). Positions 614-626 (TSTESATNENNTN) are enriched in low complexity. Positions 627–636 (PEPQFQTEAT) are enriched in polar residues. Ser649 carries the phosphoserine modification. The residue at position 654 (Thr654) is a Phosphothreonine. Residue Ser657 is modified to Phosphoserine. The IQ domain occupies 676-705 (RRSAVARIQEFFRRRKERKEMEELDTLNIR). WD repeat units follow at residues 718–756 (NSRT…HLML) and 759–798 (ADNH…RIFN). 2 positions are modified to phosphoserine: Ser847 and Ser850.

In terms of assembly, interacts with the nuclear receptors NR3C1 and AR in the presence of ligand. Interacts with DDB1, CUL4A and CUL4B. As to expression, highly expressed in skeletal muscle and testis. Expressed to a lesser degree in heart, prostate, and adrenal gland.

It is found in the nucleus. Its pathway is protein modification; protein ubiquitination. Its function is as follows. Ligand-dependent coactivator of nuclear receptors. Enhance transcriptional activity of the nuclear receptors NR3C1 and AR. May function as a substrate receptor for CUL4-DDB1 E3 ubiquitin-protein ligase complex. The protein is DDB1- and CUL4-associated factor 6 (DCAF6) of Homo sapiens (Human).